The sequence spans 267 residues: Lectin SfL-1 (267 aa).

4 consecutive repeat copies span residues 1-67 (GRYT…RRGD), 68-135 (SNNY…QSGG), 136-202 (DSYN…STGG), and 203-267 (SNYK…GTAI). A 4 X approximate tandem repeats region spans residues 1-267 (GRYTVQNQWG…GPIGFKGTAI (267 aa)).

In terms of assembly, monomer.

Functionally, lectin specific for high mannose N-glycans, recognizes the branched moiety of these glycans. Does not recognize other types of N-glycans or monosaccharides. The sequence is that of Lectin SfL-1 from Solieria filiformis (Red alga).